The following is a 241-amino-acid chain: Uridylate kinase (241 aa).

Residue 14–17 (KLSG) coordinates ATP. The interval 22–27 (GNQGFG) is involved in allosteric activation by GTP. A UMP-binding site is contributed by Gly-56. Positions 57 and 61 each coordinate ATP. Residues Asp-76 and 137-144 (TGNPYFTT) each bind UMP. The ATP site is built by Thr-164, Tyr-170, and Asp-173.

The protein belongs to the UMP kinase family. In terms of assembly, homohexamer.

It localises to the cytoplasm. It catalyses the reaction UMP + ATP = UDP + ADP. It functions in the pathway pyrimidine metabolism; CTP biosynthesis via de novo pathway; UDP from UMP (UMPK route): step 1/1. With respect to regulation, allosterically activated by GTP. Inhibited by UTP. Its function is as follows. Catalyzes the reversible phosphorylation of UMP to UDP. The protein is Uridylate kinase of Syntrophotalea carbinolica (strain DSM 2380 / NBRC 103641 / GraBd1) (Pelobacter carbinolicus).